We begin with the raw amino-acid sequence, 1005 residues long: Negative regulator of pleiotropic drug resistance STB5 (1005 aa).

A disordered region spans residues 1–28 (MSGPDKGSDSGQTANDPKQKKARNGQME). The segment at residues 32-59 (CARCRKLKKKCPRQLPECSNCLKAREPC) is a DNA-binding region (zn(2)-C6 fungal-type). Disordered stretches follow at residues 129–151 (GGEQ…SINR), 666–693 (KGKS…EDVK), and 763–831 (TKPT…SSLR). Over residues 673-693 (KRFEKSKESDSDRGVTEEDVK) the composition is skewed to basic and acidic residues. Over residues 763–773 (TKPTANIMNDQ) the composition is skewed to polar residues. Basic and acidic residues predominate over residues 792-801 (EGPKSLKEGN).

The protein resides in the nucleus. Functionally, transcription factor that negatively regulates pleiotropic drug resistance genes, including the ABC transporter genes CDR1, PDH1, and YOR1. The polypeptide is Negative regulator of pleiotropic drug resistance STB5 (Candida glabrata (strain ATCC 2001 / BCRC 20586 / JCM 3761 / NBRC 0622 / NRRL Y-65 / CBS 138) (Yeast)).